We begin with the raw amino-acid sequence, 277 residues long: Collectin-10 (277 aa).

An N-terminal signal peptide occupies residues 1–27 (MNGFRVLLRSNLSMLLLLALLHFQSLG). The N-linked (GlcNAc...) asparagine glycan is linked to Asn11. A disordered region spans residues 41 to 103 (THTISPGPKG…IGKKGDKGEK (63 aa)). The Collagen-like domain occupies 45-103 (SPGPKGDDGERGDTGEEGKDGKVGRQGPKGVKGELGDMGAQGNIGKSGPIGKKGDKGEK). Residues 49-67 (KGDDGERGDTGEEGKDGKV) show a composition bias toward basic and acidic residues. In terms of domain architecture, C-type lectin spans 155-271 (TEEKFYYIVQ…CHLTMYFVCE (117 aa)). 2 cysteine pairs are disulfide-bonded: Cys176/Cys270 and Cys248/Cys262. Asn258 carries N-linked (GlcNAc...) asparagine glycosylation.

Belongs to the COLEC10/COLEC11 family. In terms of tissue distribution, expressed mainly in the liver and stomach, but also in muscles, testes, and intestines.

The protein resides in the secreted. It is found in the golgi apparatus. The protein localises to the cytoplasm. Its function is as follows. Lectin that binds to various sugars: galactose &gt; mannose = fucose &gt; N-acetylglucosamine &gt; N-acetylgalactosamine. Acts as a chemoattractant, probably involved in the regulation of cell migration. This is Collectin-10 (Colec10) from Mus musculus (Mouse).